Here is a 338-residue protein sequence, read N- to C-terminus: Ketol-acid reductoisomerase (NADP(+)) (338 aa).

The KARI N-terminal Rossmann domain occupies 1–181 (MKVYYDKDAD…GGGKAGIIET (181 aa)). Residues 24-27 (YGSQ), Arg-47, and Ser-52 each bind NADP(+). The active site involves His-107. Gly-133 is a binding site for NADP(+). Positions 182-327 (NFREETETDL…EKLRAMMPWI (146 aa)) constitute a KARI C-terminal knotted domain. Residues Asp-190, Glu-194, Glu-226, and Glu-230 each coordinate Mg(2+). Ser-251 is a binding site for substrate.

Belongs to the ketol-acid reductoisomerase family. The cofactor is Mg(2+).

The enzyme catalyses (2R)-2,3-dihydroxy-3-methylbutanoate + NADP(+) = (2S)-2-acetolactate + NADPH + H(+). It carries out the reaction (2R,3R)-2,3-dihydroxy-3-methylpentanoate + NADP(+) = (S)-2-ethyl-2-hydroxy-3-oxobutanoate + NADPH + H(+). Its pathway is amino-acid biosynthesis; L-isoleucine biosynthesis; L-isoleucine from 2-oxobutanoate: step 2/4. The protein operates within amino-acid biosynthesis; L-valine biosynthesis; L-valine from pyruvate: step 2/4. Involved in the biosynthesis of branched-chain amino acids (BCAA). Catalyzes an alkyl-migration followed by a ketol-acid reduction of (S)-2-acetolactate (S2AL) to yield (R)-2,3-dihydroxy-isovalerate. In the isomerase reaction, S2AL is rearranged via a Mg-dependent methyl migration to produce 3-hydroxy-3-methyl-2-ketobutyrate (HMKB). In the reductase reaction, this 2-ketoacid undergoes a metal-dependent reduction by NADPH to yield (R)-2,3-dihydroxy-isovalerate. The sequence is that of Ketol-acid reductoisomerase (NADP(+)) from Variovorax paradoxus (strain S110).